Reading from the N-terminus, the 174-residue chain is Ly6/PLAUR domain-containing protein 6 (174 aa).

Positions 1–22 (MEPWPLMAWGLMLTAITGWIKA) are cleaved as a signal peptide. The UPAR/Ly6 domain occupies 47 to 141 (FKCFTCEDAP…PRNETDAIFS (95 aa)). 6 disulfide bridges follow: C49-C77, C52-C61, C70-C96, C102-C121, C107-C118, and C122-C127. N-linked (GlcNAc...) asparagine glycans are attached at residues N134 and N147. S149 carries the GPI-anchor amidated serine lipid modification. The propeptide at 150–174 (AQSTQTLPLLLLSVSITSLMLHSIN) is removed in mature form.

Interacts with fzd8 and lrp6.

The protein resides in the cell membrane. The protein localises to the membrane raft. In terms of biological role, acts as an important regulator of embryogenesis through its enhancement of Wnt/beta-catenin signaling. Positively regulates Wnt/beta-catenin signaling by ensuring phosphorylation of lrp6 specifically in plasma membrane rafts and its subsequent internalization into signaling-competent vesicles. Essential for the wnt8-mediated patterning of the mesoderm and neuroectoderm during gastrulation. This Danio rerio (Zebrafish) protein is Ly6/PLAUR domain-containing protein 6 (lypd6).